The chain runs to 266 residues: Regulatory protein RecX (266 aa).

Belongs to the RecX family.

The protein resides in the cytoplasm. Functionally, modulates RecA activity. The sequence is that of Regulatory protein RecX from Leuconostoc citreum (strain KM20).